The following is a 199-amino-acid chain: UPF0301 protein Ajs_3573 (199 aa).

This sequence belongs to the UPF0301 (AlgH) family.

This chain is UPF0301 protein Ajs_3573, found in Acidovorax sp. (strain JS42).